The following is a 253-amino-acid chain: Indole-3-glycerol phosphate synthase (253 aa).

This sequence belongs to the TrpC family.

The enzyme catalyses 1-(2-carboxyphenylamino)-1-deoxy-D-ribulose 5-phosphate + H(+) = (1S,2R)-1-C-(indol-3-yl)glycerol 3-phosphate + CO2 + H2O. It participates in amino-acid biosynthesis; L-tryptophan biosynthesis; L-tryptophan from chorismate: step 4/5. The polypeptide is Indole-3-glycerol phosphate synthase (Bacillus mycoides (strain KBAB4) (Bacillus weihenstephanensis)).